The primary structure comprises 545 residues: Methionine--tRNA ligase (545 aa).

The short motif at 15–25 (PYANGPIHIGH) is the 'HIGH' region element. Zn(2+) contacts are provided by cysteine 146, cysteine 149, cysteine 159, and cysteine 162. Residues 332-336 (KLSKS) carry the 'KMSKS' region motif. Position 335 (lysine 335) interacts with ATP.

Belongs to the class-I aminoacyl-tRNA synthetase family. MetG type 1 subfamily. As to quaternary structure, monomer. The cofactor is Zn(2+).

The protein localises to the cytoplasm. It catalyses the reaction tRNA(Met) + L-methionine + ATP = L-methionyl-tRNA(Met) + AMP + diphosphate. Its function is as follows. Is required not only for elongation of protein synthesis but also for the initiation of all mRNA translation through initiator tRNA(fMet) aminoacylation. This Buchnera aphidicola subsp. Schizaphis graminum (strain Sg) protein is Methionine--tRNA ligase (metG).